Reading from the N-terminus, the 333-residue chain is GDP-fucose transporter 1 (333 aa).

The next 8 membrane-spanning stretches (helical) occupy residues 13–33 (SIKIAFVVALYWVVSISMVFL), 45–65 (APMFVTWFQCVVAVVTCFILG), 95–115 (LVFVGMIAFNNLALKFVGVAF), 139–159 (TSMPALLMCGVIVAGFFVGVN), 169–189 (MAGIMYGVLASLCVALNAIYI), 211–231 (AIFLFLPVITFMGEIPDIAAS), 239–259 (YWFLMTVAGLLGIAIGLVSML), and 293–313 (TATWWLGNVFVLGGSLGYVLV).

It belongs to the TPT transporter family. SLC35C subfamily.

The protein localises to the golgi apparatus membrane. The catalysed reaction is GMP(out) + GDP-beta-L-fucose(in) = GMP(in) + GDP-beta-L-fucose(out). Its function is as follows. Antiporter specific for GDP-l-fucose and depending on the concomitant reverse transport of GMP. Involved in GDP-fucose import from the cytoplasm into the Golgi lumen. This is GDP-fucose transporter 1 (slc35c1) from Monosiga brevicollis (Choanoflagellate).